The following is a 265-amino-acid chain: MKIAIAGASGRMGRMLIETVLNDPEVKLSGALDRTGAPQLGQDAGAFLGKQTGVLMSDDIDAVLAQSDYLIDFTRPDGTLAHIEAALRTNTKLVIGTTGFDDAQKARIRAASEKTGIVFASNFSVGVNVTMKLLEFAARHFSQGYDIEIIEAHHRHKVDAPSGTALTMGEVIAGALGRKLEDCAVYAREGVTGERDPSTIGFSAIRGGDIVGDHTVLFAGIGERIEITHKSASRLSYAQGALRAVRFLEGHSNGLFDMQDVLGLR.

NAD(+) is bound by residues 7 to 12 and D33; that span reads GASGRM. R34 contributes to the NADP(+) binding site. Residues 96–98 and 120–123 each bind NAD(+); these read GTT and ASNF. The active-site Proton donor/acceptor is the H153. A (S)-2,3,4,5-tetrahydrodipicolinate-binding site is contributed by H154. The Proton donor role is filled by K157. A (S)-2,3,4,5-tetrahydrodipicolinate-binding site is contributed by 163–164; sequence GT.

This sequence belongs to the DapB family.

The protein resides in the cytoplasm. The enzyme catalyses (S)-2,3,4,5-tetrahydrodipicolinate + NAD(+) + H2O = (2S,4S)-4-hydroxy-2,3,4,5-tetrahydrodipicolinate + NADH + H(+). The catalysed reaction is (S)-2,3,4,5-tetrahydrodipicolinate + NADP(+) + H2O = (2S,4S)-4-hydroxy-2,3,4,5-tetrahydrodipicolinate + NADPH + H(+). The protein operates within amino-acid biosynthesis; L-lysine biosynthesis via DAP pathway; (S)-tetrahydrodipicolinate from L-aspartate: step 4/4. Its function is as follows. Catalyzes the conversion of 4-hydroxy-tetrahydrodipicolinate (HTPA) to tetrahydrodipicolinate. The sequence is that of 4-hydroxy-tetrahydrodipicolinate reductase from Paraburkholderia phymatum (strain DSM 17167 / CIP 108236 / LMG 21445 / STM815) (Burkholderia phymatum).